The sequence spans 198 residues: MICOS complex subunit MIC26 (198 aa).

The first 25 residues, 1 to 25 (MFKVIHRYVGPASLSLLTFKVYASS), serve as a signal peptide directing secretion. Residues 108 to 128 (PGFFPRLGVIGFAGVVGLVLA) traverse the membrane as a helical segment. The O-linked (Xyl...) (chondroitin sulfate) serine glycan is linked to serine 162.

The protein belongs to the apolipoprotein O/MICOS complex subunit Mic27 family. In terms of assembly, component of the mitochondrial contact site and cristae organizing system (MICOS) complex, composed of at least MICOS10/MIC10, CHCHD3/MIC19, CHCHD6/MIC25, APOOL/MIC27, IMMT/MIC60, APOO/MIC23/MIC26 and MICOS13/MIC13. This complex was also known under the names MINOS or MitOS complex. The MICOS complex associates with mitochondrial outer membrane proteins SAMM50, MTX1 and MTX2 (together described as components of the mitochondrial outer membrane sorting assembly machinery (SAM) complex) and DNAJC11, mitochondrial inner membrane protein TMEM11 and with HSPA9. The MICOS and SAM complexes together with DNAJC11 are part of a large protein complex spanning both membranes termed the mitochondrial intermembrane space bridging (MIB) complex. Interacts with IMMT/MIC60. Interacts with MICOS10/MIC10 and APOOL/MIC27. In terms of processing, O-glycosylation; glycosaminoglycan of chondroitin-sulfate type.

The protein localises to the mitochondrion inner membrane. The protein resides in the secreted. Its subcellular location is the mitochondrion. It is found in the endoplasmic reticulum membrane. It localises to the golgi apparatus membrane. Its function is as follows. Component of the MICOS complex, a large protein complex of the mitochondrial inner membrane that plays crucial roles in the maintenance of crista junctions, inner membrane architecture, and formation of contact sites to the outer membrane. Plays a crucial role in crista junction formation and mitochondrial function. Can induce cardiac lipotoxicity by enhancing mitochondrial respiration and fatty acid metabolism in cardiac myoblasts. Promotes cholesterol efflux from macrophage cells. Detected in HDL, LDL and VLDL. Secreted by a microsomal triglyceride transfer protein (MTTP)-dependent mechanism, probably as a VLDL-associated protein that is subsequently transferred to HDL. This chain is MICOS complex subunit MIC26 (APOO), found in Bos taurus (Bovine).